Reading from the N-terminus, the 325-residue chain is Serine/threonine-protein phosphatase 2A activator 1 (325 aa).

The protein belongs to the PTPA-type PPIase family.

It localises to the cytoplasm. The protein resides in the nucleus. It catalyses the reaction [protein]-peptidylproline (omega=180) = [protein]-peptidylproline (omega=0). PPIases accelerate the folding of proteins. It catalyzes the cis-trans isomerization of proline imidic peptide bonds in oligopeptides. Acts as a regulatory subunit for PP2A-like phosphatases modulating their activity or substrate specificity, probably by inducing a conformational change in the catalytic subunit, a direct target of the PPIase. Can reactivate inactive phosphatase PP2A-phosphatase methylesterase complexes (PP2Ai) in presence of ATP and Mg(2+) by dissociating the inactive form from the complex. The chain is Serine/threonine-protein phosphatase 2A activator 1 (rrd1) from Schizosaccharomyces pombe (strain 972 / ATCC 24843) (Fission yeast).